The chain runs to 465 residues: Ribulose bisphosphate carboxylase large chain (465 aa).

An N6,N6,N6-trimethyllysine modification is found at Lys4. Asn113 and Thr163 together coordinate substrate. The active-site Proton acceptor is Lys165. Lys167 lines the substrate pocket. The Mg(2+) site is built by Lys191, Asp193, and Glu194. Residue Lys191 is modified to N6-carboxylysine. Residue His284 is the Proton acceptor of the active site. Residues Arg285, His317, and Ser369 each contribute to the substrate site.

The protein belongs to the RuBisCO large chain family. Type I subfamily. In terms of assembly, heterohexadecamer of 8 large chains and 8 small chains; disulfide-linked. The disulfide link is formed within the large subunit homodimers. Requires Mg(2+) as cofactor. In terms of processing, the disulfide bond which can form in the large chain dimeric partners within the hexadecamer appears to be associated with oxidative stress and protein turnover.

The protein resides in the plastid. It is found in the chloroplast. It carries out the reaction 2 (2R)-3-phosphoglycerate + 2 H(+) = D-ribulose 1,5-bisphosphate + CO2 + H2O. The catalysed reaction is D-ribulose 1,5-bisphosphate + O2 = 2-phosphoglycolate + (2R)-3-phosphoglycerate + 2 H(+). Its function is as follows. RuBisCO catalyzes two reactions: the carboxylation of D-ribulose 1,5-bisphosphate, the primary event in carbon dioxide fixation, as well as the oxidative fragmentation of the pentose substrate in the photorespiration process. Both reactions occur simultaneously and in competition at the same active site. In Fragaria ananassa (Strawberry), this protein is Ribulose bisphosphate carboxylase large chain.